We begin with the raw amino-acid sequence, 576 residues long: MAGUK p55 subfamily member 2 (576 aa).

L27 domains are found at residues 8–60 and 84–142; these read SETA…FMQQ and LEAV…YETP. Ser-42 bears the Phosphoserine mark. Position 141 is a phosphothreonine (Thr-141). Phosphoserine is present on Ser-145. Positions 185–240 constitute a PDZ domain; sequence ELVIARILHGGMVAQQGLLHVGDIIKEVNGQPVGSDPRALQELLRNASGSVILKIL. In terms of domain architecture, SH3 spans 249-317; it reads PRQVFVKCHF…PSQLLEEKRK (69 aa). Positions 374–561 constitute a Guanylate kinase-like domain; that stretch reads RKTLVLIGAQ…TFRELQTAME (188 aa).

This sequence belongs to the MAGUK family. In terms of assembly, can homomultimerise. Interacts with CACNG2. Interacts (via the SH3-Guanylate kinase-like sub-module) with DLG4/PSD95 and DLGAP1/GKAP. Interacts (via the PDZ domain) with CADM1 (via C-terminus). Interacts with KCNN2/SK2 (via N-terminal domain). Interacts with SRC. Post-translationally, phosphorylated by SRC.

The protein localises to the cytoplasm. It localises to the cytoskeleton. It is found in the membrane. Its subcellular location is the cell projection. The protein resides in the dendrite. The protein localises to the postsynaptic density. Its function is as follows. Postsynaptic MAGUK scaffold protein that links CADM1 cell adhesion molecules to core components of the postsynaptic density. In CA1 pyramidal neurons, required for synaptic KCNN2-containing channel function and long-term potentiation expression. Seems to negatively regulate SRC function in epithelial cells. This is MAGUK p55 subfamily member 2 from Homo sapiens (Human).